The primary structure comprises 1414 residues: DNA-directed RNA polymerase subunit beta'' (1414 aa).

Residues Cys220, Cys293, Cys300, and Cys303 each coordinate Zn(2+).

Belongs to the RNA polymerase beta' chain family. RpoC2 subfamily. As to quaternary structure, in plastids the minimal PEP RNA polymerase catalytic core is composed of four subunits: alpha, beta, beta', and beta''. When a (nuclear-encoded) sigma factor is associated with the core the holoenzyme is formed, which can initiate transcription. It depends on Zn(2+) as a cofactor.

It is found in the plastid. The protein resides in the chloroplast. The enzyme catalyses RNA(n) + a ribonucleoside 5'-triphosphate = RNA(n+1) + diphosphate. In terms of biological role, DNA-dependent RNA polymerase catalyzes the transcription of DNA into RNA using the four ribonucleoside triphosphates as substrates. This is DNA-directed RNA polymerase subunit beta'' from Angiopteris evecta (Mule's foot fern).